Consider the following 274-residue polypeptide: 2-succinyl-6-hydroxy-2,4-cyclohexadiene-1-carboxylate synthase (274 aa).

This sequence belongs to the AB hydrolase superfamily. MenH family. As to quaternary structure, monomer.

The enzyme catalyses 5-enolpyruvoyl-6-hydroxy-2-succinyl-cyclohex-3-ene-1-carboxylate = (1R,6R)-6-hydroxy-2-succinyl-cyclohexa-2,4-diene-1-carboxylate + pyruvate. It functions in the pathway quinol/quinone metabolism; 1,4-dihydroxy-2-naphthoate biosynthesis; 1,4-dihydroxy-2-naphthoate from chorismate: step 3/7. Its pathway is quinol/quinone metabolism; menaquinone biosynthesis. Catalyzes a proton abstraction reaction that results in 2,5-elimination of pyruvate from 2-succinyl-5-enolpyruvyl-6-hydroxy-3-cyclohexene-1-carboxylate (SEPHCHC) and the formation of 2-succinyl-6-hydroxy-2,4-cyclohexadiene-1-carboxylate (SHCHC). The polypeptide is 2-succinyl-6-hydroxy-2,4-cyclohexadiene-1-carboxylate synthase (Yersinia enterocolitica serotype O:8 / biotype 1B (strain NCTC 13174 / 8081)).